Here is a 336-residue protein sequence, read N- to C-terminus: Fructose-1,6-bisphosphatase class 1 (336 aa).

Residues Glu-92, Asp-115, Leu-117, and Asp-118 each contribute to the Mg(2+) site. Substrate is bound by residues 118-121, Asn-211, Tyr-244, 262-264, and Lys-274; these read DGSS and YLY. Residue Glu-280 participates in Mg(2+) binding.

The protein belongs to the FBPase class 1 family. As to quaternary structure, homotetramer. It depends on Mg(2+) as a cofactor.

Its subcellular location is the cytoplasm. It catalyses the reaction beta-D-fructose 1,6-bisphosphate + H2O = beta-D-fructose 6-phosphate + phosphate. Its pathway is carbohydrate biosynthesis; gluconeogenesis. This is Fructose-1,6-bisphosphatase class 1 from Aliivibrio salmonicida (strain LFI1238) (Vibrio salmonicida (strain LFI1238)).